A 160-amino-acid polypeptide reads, in one-letter code: Cytochrome b6-f complex subunit 4 (160 aa).

3 helical membrane-spanning segments follow: residues 36–56, 95–115, and 131–151; these read LLYM…GLAV, LLGI…PFIE, and AVFL…ALPI.

The protein belongs to the cytochrome b family. PetD subfamily. The 4 large subunits of the cytochrome b6-f complex are cytochrome b6, subunit IV (17 kDa polypeptide, PetD), cytochrome f and the Rieske protein, while the 4 small subunits are PetG, PetL, PetM and PetN. The complex functions as a dimer.

The protein localises to the cellular thylakoid membrane. In terms of biological role, component of the cytochrome b6-f complex, which mediates electron transfer between photosystem II (PSII) and photosystem I (PSI), cyclic electron flow around PSI, and state transitions. The polypeptide is Cytochrome b6-f complex subunit 4 (Synechococcus elongatus (strain ATCC 33912 / PCC 7942 / FACHB-805) (Anacystis nidulans R2)).